Here is a 996-residue protein sequence, read N- to C-terminus: Disease resistance protein RGA4 (996 aa).

The segment at 1-176 (MEAALLSGFI…PRIHEADLVG (176 aa)) is structured coiled coil (CC) domain. A coiled-coil region spans residues 111–138 (NLQLAQQLQRLKRMAAEANQRKQRYTAA). The region spanning 180–462 (DREELLEQLA…RWLAEGFVEP (283 aa)) is the NB-ARC domain. LRR repeat units lie at residues 481-503 (RNII…TYGM), 504-528 (MREF…KFVP), 529-549 (KYVR…NFNG), 577-599 (LRVL…ICNL), 600-621 (VLLK…IAKL), 622-644 (KDLE…VFGL), 698-722 (MNKL…DLRE), 759-781 (PCYL…VTSL), 782-804 (RGLK…ALSN), 805-830 (LSYL…GFPR), and 851-874 (LPFL…QIEC).

This sequence belongs to the disease resistance NB-LRR family. As to quaternary structure, forms homodimer or heterodimer with RGA5 through its coiled coil (CC) domain. In terms of tissue distribution, expressed in leaves.

Its subcellular location is the cytoplasm. In terms of biological role, disease resistance (R) protein. Resistance proteins guard the plant against pathogens that contain an appropriate avirulence protein via an indirect interaction with this avirulence protein. That triggers a defense system including the hypersensitive response, which restricts the pathogen growth. Contribution of RGA5 is required to recognize the effector avirulence proteins AVR-Pia and AVR1-CO39 from M.oryzae. Acts as a constitutively active cell death inducer that is repressed by RGA5. Immune response triggered by the RGA4-RGA5 -mediated recognition of AVR1-CO39 confers resistance to X.oryzae pathovars. The protein is Disease resistance protein RGA4 of Oryza sativa subsp. japonica (Rice).